A 257-amino-acid chain; its full sequence is uncharacterized protein (257 aa).

A helical transmembrane segment spans residues 7-27; that stretch reads IGILEIVVILSILITSVSLAY.

The protein resides in the membrane. This is an uncharacterized protein from Methanocaldococcus jannaschii (strain ATCC 43067 / DSM 2661 / JAL-1 / JCM 10045 / NBRC 100440) (Methanococcus jannaschii).